The sequence spans 337 residues: Holliday junction branch migration complex subunit RuvB (337 aa).

Positions 1 to 179 (MTHQVSVLHQ…FSFTGRMSYY (179 aa)) are large ATPase domain (RuvB-L). Residues leucine 18, arginine 19, glycine 60, lysine 63, threonine 64, serine 65, 126-128 (EDY), arginine 169, tyrosine 179, and arginine 216 contribute to the ATP site. Mg(2+) is bound at residue threonine 64. Residues 180–250 (SDEDLTTILK…VAEKALAMLL (71 aa)) form a small ATPAse domain (RuvB-S) region. The segment at 253–337 (DWGLNEIDIK…DNLQSLGEEK (85 aa)) is head domain (RuvB-H). 2 residues coordinate DNA: lysine 308 and arginine 313.

It belongs to the RuvB family. Homohexamer. Forms an RuvA(8)-RuvB(12)-Holliday junction (HJ) complex. HJ DNA is sandwiched between 2 RuvA tetramers; dsDNA enters through RuvA and exits via RuvB. An RuvB hexamer assembles on each DNA strand where it exits the tetramer. Each RuvB hexamer is contacted by two RuvA subunits (via domain III) on 2 adjacent RuvB subunits; this complex drives branch migration. In the full resolvosome a probable DNA-RuvA(4)-RuvB(12)-RuvC(2) complex forms which resolves the HJ.

It localises to the cytoplasm. The catalysed reaction is ATP + H2O = ADP + phosphate + H(+). The RuvA-RuvB-RuvC complex processes Holliday junction (HJ) DNA during genetic recombination and DNA repair, while the RuvA-RuvB complex plays an important role in the rescue of blocked DNA replication forks via replication fork reversal (RFR). RuvA specifically binds to HJ cruciform DNA, conferring on it an open structure. The RuvB hexamer acts as an ATP-dependent pump, pulling dsDNA into and through the RuvAB complex. RuvB forms 2 homohexamers on either side of HJ DNA bound by 1 or 2 RuvA tetramers; 4 subunits per hexamer contact DNA at a time. Coordinated motions by a converter formed by DNA-disengaged RuvB subunits stimulates ATP hydrolysis and nucleotide exchange. Immobilization of the converter enables RuvB to convert the ATP-contained energy into a lever motion, pulling 2 nucleotides of DNA out of the RuvA tetramer per ATP hydrolyzed, thus driving DNA branch migration. The RuvB motors rotate together with the DNA substrate, which together with the progressing nucleotide cycle form the mechanistic basis for DNA recombination by continuous HJ branch migration. Branch migration allows RuvC to scan DNA until it finds its consensus sequence, where it cleaves and resolves cruciform DNA. The polypeptide is Holliday junction branch migration complex subunit RuvB (Chlamydia caviae (strain ATCC VR-813 / DSM 19441 / 03DC25 / GPIC) (Chlamydophila caviae)).